The following is a 154-amino-acid chain: Sperm microtubule associated protein 1 (154 aa).

This chain is Sperm microtubule associated protein 1, found in Homo sapiens (Human).